A 247-amino-acid chain; its full sequence is UPF0246 protein LAF_1150 (247 aa).

The protein belongs to the UPF0246 family.

This chain is UPF0246 protein LAF_1150, found in Limosilactobacillus fermentum (strain NBRC 3956 / LMG 18251) (Lactobacillus fermentum).